A 95-amino-acid polypeptide reads, in one-letter code: Pancreatic polypeptide prohormone (95 aa).

A signal peptide spans 1 to 29 (MAAARLCLSLLLLSTCVALLLQPLLGAQG). Tyrosine 65 bears the Tyrosine amide mark. A propeptide spanning residues 89–95 (ELSPLDL) is cleaved from the precursor.

Belongs to the NPY family.

It localises to the secreted. In terms of biological role, hormone secreted by pancreatic cells that acts as a regulator of pancreatic and gastrointestinal functions probably by signaling through the G protein-coupled receptor NPY4R2. The chain is Pancreatic polypeptide prohormone from Homo sapiens (Human).